The following is a 125-amino-acid chain: Small ribosomal subunit protein uS13 (125 aa).

This sequence belongs to the universal ribosomal protein uS13 family. Part of the 30S ribosomal subunit. Forms a loose heterodimer with protein S19. Forms two bridges to the 50S subunit in the 70S ribosome.

In terms of biological role, located at the top of the head of the 30S subunit, it contacts several helices of the 16S rRNA. In the 70S ribosome it contacts the 23S rRNA (bridge B1a) and protein L5 of the 50S subunit (bridge B1b), connecting the 2 subunits; these bridges are implicated in subunit movement. Contacts the tRNAs in the A and P-sites. This Rickettsia africae (strain ESF-5) protein is Small ribosomal subunit protein uS13.